Consider the following 775-residue polypeptide: Mitochondrial intermediate peptidase (775 aa).

The transit peptide at 1-28 directs the protein to the mitochondrion; the sequence is MIARPARDVLSSATKKQFRFRGCLAARH. Position 558 (H558) interacts with Zn(2+). The active site involves E559. 2 residues coordinate Zn(2+): H562 and H565.

Belongs to the peptidase M3 family. Zn(2+) serves as cofactor.

The protein localises to the mitochondrion matrix. The catalysed reaction is Release of an N-terminal octapeptide as second stage of processing of some proteins imported into the mitochondrion.. Its function is as follows. Cleaves proteins, imported into the mitochondrion, to their mature size. While most mitochondrial precursor proteins are processed to the mature form in one step by mitochondrial processing peptidase (MPP), the sequential cleavage by MIP of an octapeptide after initial processing by MPP is a required step for a subgroup of nuclear-encoded precursor proteins destined for the matrix or the inner membrane. This chain is Mitochondrial intermediate peptidase (OCT1), found in Schizophyllum commune (Split gill fungus).